A 274-amino-acid polypeptide reads, in one-letter code: Serine protease 28 (274 aa).

The signal sequence occupies residues 1 to 26; sequence MFRLLLLALSCLESTVFMASVSISRS. The Peptidase S1 domain maps to 31–274; it reads IVGGQRTPPG…SLAWIHQHIQ (244 aa). Cys62 and Cys78 are oxidised to a cystine. His77 functions as the Charge relay system in the catalytic mechanism. Asn106 is a glycosylation site (N-linked (GlcNAc...) asparagine). Asp124 serves as the catalytic Charge relay system. 3 disulfide bridges follow: Cys158–Cys233, Cys191–Cys214, and Cys223–Cys251. The Charge relay system role is filled by Ser227.

Belongs to the peptidase S1 family. As to quaternary structure, homooligomer, heterodimer and heterotetramer. Able to form homo- and hetero- tetrameric structures. Heterotetramer is far more stable than the homotetramer. Expressed in embryos throughout the preimplantation period, during blastocyst hatching and embryo outgrowth. Found in uterus especially in glandular epithelium.

It localises to the secreted. Its activity is regulated as follows. Inhibited by benzamidine, (4-amidino-phenyl)-methane-sulfonyl (APMSF), N-p-tosyl-L-lysine chloromethylketone (TLCK), gabexate, mesylate, BABIM and trypsin soybean inhibitor (TSI). Its function is as follows. Involved in embryo hatching and implantation. The protein is Serine protease 28 (Prss28) of Mus musculus (Mouse).